Consider the following 488-residue polypeptide: Putative BTB/POZ domain-containing protein L674 (488 aa).

The 68-residue stretch at 83-150 (NIVYFNIGGK…VKNQKCPINN (68 aa)) folds into the BTB domain.

The protein belongs to the mimivirus BTB/WD family.

This chain is Putative BTB/POZ domain-containing protein L674, found in Acanthamoeba polyphaga (Amoeba).